We begin with the raw amino-acid sequence, 332 residues long: T-cell surface glycoprotein CD1b2 (332 aa).

Positions 1–17 (MLLLVLALLAVLFPAGD) are cleaved as a signal peptide. Residues 18 to 301 (TQDAFPEPIS…ILYWGNSSIG (284 aa)) are Extracellular-facing. N-linked (GlcNAc...) asparagine glycosylation is found at N38, N75, and N146. Intrachain disulfides connect C120-C184, C149-C163, and C224-C279. Positions 185-295 (PRYLMSVLEA…LGGQDIILYW (111 aa)) constitute an Ig-like domain. N297 carries N-linked (GlcNAc...) asparagine glycosylation. Residues 302-322 (WIILAVFVSCLIVLLFYVLWF) form a helical membrane-spanning segment. Residues 323–332 (YKHWSYQDIL) lie on the Cytoplasmic side of the membrane. Positions 328 to 331 (YQDI) match the Internalization signal motif.

In terms of assembly, heterodimer with B2M (beta-2-microglobulin). Interacts with saposin C.

Its subcellular location is the cell membrane. The protein resides in the endosome membrane. It localises to the lysosome membrane. Functionally, antigen-presenting protein that binds self and non-self lipid and glycolipid antigens and presents them to T-cell receptors on natural killer T-cells. The chain is T-cell surface glycoprotein CD1b2 (CD1B2) from Cavia porcellus (Guinea pig).